The sequence spans 582 residues: Sulfite reductase [NADPH] hemoprotein beta-component (582 aa).

Residues 1 to 12 (MDLKVKVDRSRD) are compositionally biased toward basic and acidic residues. The tract at residues 1–26 (MDLKVKVDRSRDVSQPLDKLGPDETL) is disordered. The [4Fe-4S] cluster site is built by cysteine 447, cysteine 453, cysteine 492, and cysteine 496. Residue cysteine 496 coordinates siroheme.

Belongs to the nitrite and sulfite reductase 4Fe-4S domain family. As to quaternary structure, alpha(8)-beta(8). The alpha component is a flavoprotein, the beta component is a hemoprotein. It depends on siroheme as a cofactor. The cofactor is [4Fe-4S] cluster.

It carries out the reaction hydrogen sulfide + 3 NADP(+) + 3 H2O = sulfite + 3 NADPH + 4 H(+). It participates in sulfur metabolism; hydrogen sulfide biosynthesis; hydrogen sulfide from sulfite (NADPH route): step 1/1. In terms of biological role, component of the sulfite reductase complex that catalyzes the 6-electron reduction of sulfite to sulfide. This is one of several activities required for the biosynthesis of L-cysteine from sulfate. In Afipia carboxidovorans (strain ATCC 49405 / DSM 1227 / KCTC 32145 / OM5) (Oligotropha carboxidovorans), this protein is Sulfite reductase [NADPH] hemoprotein beta-component.